The following is a 127-amino-acid chain: Phosphoribosyl-AMP cyclohydrolase (127 aa).

Mg(2+) is bound at residue aspartate 75. Cysteine 76 contacts Zn(2+). Residues aspartate 77 and aspartate 79 each contribute to the Mg(2+) site. Residues cysteine 93 and cysteine 100 each contribute to the Zn(2+) site.

This sequence belongs to the PRA-CH family. Homodimer. The cofactor is Mg(2+). Zn(2+) serves as cofactor.

Its subcellular location is the cytoplasm. It catalyses the reaction 1-(5-phospho-beta-D-ribosyl)-5'-AMP + H2O = 1-(5-phospho-beta-D-ribosyl)-5-[(5-phospho-beta-D-ribosylamino)methylideneamino]imidazole-4-carboxamide. It participates in amino-acid biosynthesis; L-histidine biosynthesis; L-histidine from 5-phospho-alpha-D-ribose 1-diphosphate: step 3/9. Catalyzes the hydrolysis of the adenine ring of phosphoribosyl-AMP. The chain is Phosphoribosyl-AMP cyclohydrolase from Desulfotalea psychrophila (strain LSv54 / DSM 12343).